Here is a 988-residue protein sequence, read N- to C-terminus: Chloride channel protein 1 (988 aa).

Topologically, residues 1–118 (MEQSRSQQRG…VVRRKLGEDG (118 aa)) are cytoplasmic. Residues 65–75 (HKEQFSDREQD) show a composition bias toward basic and acidic residues. Positions 65–92 (HKEQFSDREQDIGMPKKTGSSSTVDSKD) are disordered. The helical transmembrane segment at 119 to 150 (IFLVLLGLLMALVSWSMDYVSAKSLQAYKWSY) threads the bilayer. Over 151–158 (AQMQPSLP) the chain is Extracellular. The chain crosses the membrane as a helical span at residues 159–179 (LQFLVWVTFPLVLILFSALFC). Residues 180 to 183 (HLIS) are Cytoplasmic-facing. The segment at residues 184–189 (PQAVGS) is an intramembrane region (note=Loop between two helices). The short motif at 188–192 (GSGIP) is the Selectivity filter part_1 element. Residue Ser189 participates in chloride binding. Positions 190 to 195 (GIPEMK) form an intramembrane region, helical. The Cytoplasmic segment spans residues 196-208 (TILRGVVLKEYLT). The helical intramembrane region spans 209–224 (MKAFVAKVVALTAGLG). The note=Loop between two helices intramembrane region spans 225–230 (SGIPVG). Positions 230 to 234 (GKEGP) match the Selectivity filter part_2 motif. The segment at residues 231–246 (KEGPFVHIASICAAVL) is an intramembrane region (helical). Topologically, residues 247–268 (SKFMSVFCGVYEQPYYYSDILT) are cytoplasmic. 2 consecutive intramembrane regions (helical) follow at residues 269 to 280 (VGCAVGVGCCFG) and 281 to 290 (TPLGGVLFSI). Residues 291-301 (EVTSTYFAVRN) are Cytoplasmic-facing. The helical transmembrane segment at 302-321 (YWRGFFAATFSAFVFRVLAV) threads the bilayer. Over 322 to 347 (WNKDAVTITALFRTNFRMDFPFDLKE) the chain is Extracellular. A helical transmembrane segment spans residues 348-376 (LPAFAAIGICCGLLGAVFVYLHRQVMLGV). Topologically, residues 377–390 (RKHKALSQFLAKHR) are cytoplasmic. Residues 391 to 408 (LLYPGIVTFVIASFTFPP) traverse the membrane as a helical segment. Residues 409–414 (GMGQFM) are Extracellular-facing. An intramembrane region (note=Loop between two helices) is located at residues 415-418 (AGEL). The segment at residues 419-426 (MPREAIST) is an intramembrane region (helical). At 427–457 (LFDNNTWVKHAGDPESLGQSAVWIHPRVNVV) the chain is on the extracellular side. Positions 458–475 (IIIFLFFVMKFWMSIVAT) form an intramembrane region, helical. The note=Loop between two helices intramembrane region spans 476-482 (TMPIPCG). A Selectivity filter part_3 motif is present at residues 482–486 (GGFMP). The segment at residues 483 to 498 (GFMPVFVLGAAFGRLV) is an intramembrane region (helical). Chloride is bound at residue Phe484. Topologically, residues 499 to 521 (GEIMAMLFPDGILFDDIIYKILP) are extracellular. The segment at residues 522 to 538 (GGYAVIGAAALTGAVSH) is an intramembrane region (helical). An intramembrane region (note=Loop between two helices) is located at residues 539–540 (TV). The helical intramembrane region spans 541–554 (STAVICFELTGQIA). At 555-557 (HIL) the chain is on the extracellular side. Residues 558-571 (PMMVAVILANMVAQ) constitute an intramembrane region (helical). Residues 572 to 575 (SLQP) constitute an intramembrane region (note=Loop between two helices). Residues 576–578 (SLY) constitute an intramembrane region (helical). Position 578 (Tyr578) interacts with chloride. Residues 579 to 988 (DSIIQVKKLP…DEEDEDELIL (410 aa)) are Cytoplasmic-facing. In terms of domain architecture, CBS 1 spans 609-668 (MVRDVKFVSASYTYGELRTLLQTTTVKTLPLVDSKDSMILLGSVERSELQALLQRHLCPE). The interval 713 to 764 (EDEDEDLSGKSELPPSLALHPSTTAPLSPEEPNGPLPGHKQQPEAPEPAGQR) is disordered. The region spanning 821 to 876 (IDQSPFQLVEQTTLHKTHTLFSLLGLHLAYVTSMGKLRGVLALEELQKAIEGHTKS) is the CBS 2 domain. The disordered stretch occupies residues 880-988 (LRPPLASFRN…DEEDEDELIL (109 aa)). Ser886 bears the Phosphoserine mark. Polar residues predominate over residues 887 to 906 (FRNTTSTRKSTGAPPSSAEN). Residues 929–941 (TPVPSPSPEPPLS) show a composition bias toward pro residues. 2 stretches are compositionally biased toward acidic residues: residues 950-967 (ELEE…EELA) and 979-988 (DEEDEDELIL).

This sequence belongs to the chloride channel (TC 2.A.49) family. ClC-1/CLCN1 subfamily. As to quaternary structure, homodimer. As to expression, predominantly expressed in skeletal muscles.

Its subcellular location is the cell membrane. The protein localises to the sarcolemma. It is found in the T-tubule. The catalysed reaction is chloride(in) = chloride(out). It carries out the reaction thiocyanate(in) = thiocyanate(out). It catalyses the reaction bromide(in) = bromide(out). The enzyme catalyses nitrate(in) = nitrate(out). The catalysed reaction is iodide(out) = iodide(in). Modulated by membrane voltage with depolarization favouring channel opening and hyperpolarization favouring channel closure. Inhibited by acidic pH and ATP binding due to a shift of voltage dependence of common gating to more positive voltages. Inhibited by 9-anthracene-carboxylic. Functionally, voltage-gated chloride channel involved in skeletal muscle excitability. Generates most of the plasma membrane chloride conductance in skeletal muscle fibers, stabilizes the resting membrane potential and contributes to the repolarization phase during action potential firing. Forms a homodimeric channel where each subunit has its own ion conduction pathway. Conducts double-barreled currents controlled by two types of gates, two fast glutamate gates that control each subunit independently and a slow common gate that opens and shuts off both subunits simultaneously. Has a significant open probability at muscle resting potential and is further activated upon membrane depolarization. Permeable to small monovalent anions with ion selectivity for chloride &gt; thiocyanate &gt; bromide &gt; nitrate &gt; iodide. The protein is Chloride channel protein 1 of Homo sapiens (Human).